The chain runs to 231 residues: AA9 family lytic polysaccharide monooxygenase C (231 aa).

A signal peptide spans 1 to 18 (MKSGLLFTTASLALTASA). Residue His-19 coordinates Cu(2+). An intrachain disulfide couples Cys-60 to Cys-179. 2 N-linked (GlcNAc...) asparagine glycosylation sites follow: Asn-69 and Asn-143. O2 contacts are provided by His-165 and Gln-174. Residue Tyr-176 coordinates Cu(2+).

The protein belongs to the polysaccharide monooxygenase AA9 family. Cu(2+) is required as a cofactor.

Its subcellular location is the secreted. It carries out the reaction [(1-&gt;4)-beta-D-glucosyl]n+m + reduced acceptor + O2 = 4-dehydro-beta-D-glucosyl-[(1-&gt;4)-beta-D-glucosyl]n-1 + [(1-&gt;4)-beta-D-glucosyl]m + acceptor + H2O.. Functionally, lytic polysaccharide monooxygenase (LPMO) that depolymerizes crystalline and amorphous polysaccharides via the oxidation of scissile alpha- or beta-(1-4)-glycosidic bonds, yielding C1 oxidation products. Catalysis by LPMOs requires the reduction of the active-site copper from Cu(II) to Cu(I) by a reducing agent and H(2)O(2) or O(2) as a cosubstrate. The chain is AA9 family lytic polysaccharide monooxygenase C from Emericella nidulans (strain FGSC A4 / ATCC 38163 / CBS 112.46 / NRRL 194 / M139) (Aspergillus nidulans).